A 196-amino-acid chain; its full sequence is Imidazoleglycerol-phosphate dehydratase (196 aa).

It belongs to the imidazoleglycerol-phosphate dehydratase family.

The protein localises to the cytoplasm. The enzyme catalyses D-erythro-1-(imidazol-4-yl)glycerol 3-phosphate = 3-(imidazol-4-yl)-2-oxopropyl phosphate + H2O. It participates in amino-acid biosynthesis; L-histidine biosynthesis; L-histidine from 5-phospho-alpha-D-ribose 1-diphosphate: step 6/9. The sequence is that of Imidazoleglycerol-phosphate dehydratase from Desulforudis audaxviator (strain MP104C).